The chain runs to 500 residues: AAA-ATPase At3g28580 (500 aa).

Residues 7 to 29 (LWTNTGSALATLMFVYTIFKQFF) traverse the membrane as a helical segment. The segment at 174 to 193 (NRERKLYSNTPGQSHGNNSK) is disordered. Residues 180–193 (YSNTPGQSHGNNSK) are compositionally biased toward polar residues. ATP is bound at residue 247-254 (GPPGTGKS). The interval 462–500 (KEEAKKKVEEEEEEKQRKKEKVKEIEAEKEKKKKIEEEN) is disordered.

It belongs to the AAA ATPase family. BCS1 subfamily. Requires Mg(2+) as cofactor.

The protein localises to the membrane. It carries out the reaction ATP + H2O = ADP + phosphate + H(+). This Arabidopsis thaliana (Mouse-ear cress) protein is AAA-ATPase At3g28580.